The primary structure comprises 369 residues: Glutamate 5-kinase (369 aa).

K9 provides a ligand contact to ATP. Positions 49, 136, and 148 each coordinate substrate. ATP contacts are provided by residues 168-169 (TD) and 210-216 (TGGMLTK). One can recognise a PUA domain in the interval 275-355 (QGSIWVDKGA…KGVLIYRDDW (81 aa)).

Belongs to the glutamate 5-kinase family.

The protein resides in the cytoplasm. The enzyme catalyses L-glutamate + ATP = L-glutamyl 5-phosphate + ADP. It participates in amino-acid biosynthesis; L-proline biosynthesis; L-glutamate 5-semialdehyde from L-glutamate: step 1/2. In terms of biological role, catalyzes the transfer of a phosphate group to glutamate to form L-glutamate 5-phosphate. This Streptococcus pneumoniae (strain ATCC 700669 / Spain 23F-1) protein is Glutamate 5-kinase.